Here is a 545-residue protein sequence, read N- to C-terminus: Glucose-6-phosphate isomerase (545 aa).

Glu-351 functions as the Proton donor in the catalytic mechanism. Residues His-382 and Lys-510 contribute to the active site.

The protein belongs to the GPI family.

The protein localises to the cytoplasm. It carries out the reaction alpha-D-glucose 6-phosphate = beta-D-fructose 6-phosphate. Its pathway is carbohydrate biosynthesis; gluconeogenesis. The protein operates within carbohydrate degradation; glycolysis; D-glyceraldehyde 3-phosphate and glycerone phosphate from D-glucose: step 2/4. In terms of biological role, catalyzes the reversible isomerization of glucose-6-phosphate to fructose-6-phosphate. The sequence is that of Glucose-6-phosphate isomerase from Shewanella denitrificans (strain OS217 / ATCC BAA-1090 / DSM 15013).